The primary structure comprises 241 residues: MNAESSSQAQNVDHHEIAKFEAVASRWWDLEGEFKPLHRINPLRLNYILQRAGGIFDKTVLDVGCGGGILAESMAREGAQVTGLDMGAEPLQVARLHALESGVNVAYIQETVESHAQANPQRYDVVTCMEMLEHVPDPASVVRACAHLVKPGGHVFFSTINRNTKAWLMAVVGAEYILKMVPQGTHDHKKFIRPSELIGWVDGTPLREKHMIGLHYNPITDHFKLGRNVDVNYMVHTQHEG.

Residues R44, G64, D85, and M129 each coordinate S-adenosyl-L-methionine.

This sequence belongs to the methyltransferase superfamily. UbiG/COQ3 family.

It catalyses the reaction a 3-demethylubiquinol + S-adenosyl-L-methionine = a ubiquinol + S-adenosyl-L-homocysteine + H(+). It carries out the reaction a 3-(all-trans-polyprenyl)benzene-1,2-diol + S-adenosyl-L-methionine = a 2-methoxy-6-(all-trans-polyprenyl)phenol + S-adenosyl-L-homocysteine + H(+). Its pathway is cofactor biosynthesis; ubiquinone biosynthesis. O-methyltransferase that catalyzes the 2 O-methylation steps in the ubiquinone biosynthetic pathway. The protein is Ubiquinone biosynthesis O-methyltransferase of Serratia proteamaculans (strain 568).